The sequence spans 323 residues: V-type ATP synthase subunit C (323 aa).

This sequence belongs to the V-ATPase V0D/AC39 subunit family.

Its function is as follows. Produces ATP from ADP in the presence of a proton gradient across the membrane. This is V-type ATP synthase subunit C from Thermus thermophilus (strain ATCC BAA-163 / DSM 7039 / HB27).